We begin with the raw amino-acid sequence, 189 residues long: Phomopsin biosynthesis cluster protein D (189 aa).

It belongs to the oryJ family.

Its function is as follows. Part of the gene cluster that mediates the biosynthesis of the phomopsins, a group of hexapeptide mycotoxins which infects lupins and causes lupinosis disease in livestock. The role of phomC within the phomopsins biosynthesis pathway has still to be determined. The pathway starts with the processing of the precursor phomA by several endopeptidases including kexin proteases as well as the cluster-specific S41 family peptidase phomP1 and the oligopeptidase phomG to produce 10 identical copies of the hexapeptide Tyr-Val-Ile-Pro-Ile-Asp. After being excised from the precursor peptide, the core peptides are cyclized and modified post-translationally by enzymes encoded within the gene cluster. The timing and order of proteolysis of the phomA precursor and PTMs are still unknown. Two tyrosinase-like enzymes, phomQ1 and phomQ2, catalyze the chlorination and hydroxylation of Tyr, respectively. PhomYb, is proposed to be involved in the construction of the macrocyclic structure. The other 4 ustYa family proteins may be involved in PTMs that generate the unique structure of phomopsin A. PhomYa is required for the hydroxylation of C-beta of Tyr. PhomYc, phomYd, and phomYe are responsible for the biosynthesis of 2,3-dehydroisoleucine (dIle), 2,3-dehydroaspartic acid (dAsp), and 3,4-dehydroproline (dPro), respectively. While dIle formation by phomYc is indispensable for the installation of dAsp by phomYd, the order of the other PTMs have not been elucidated yet. Most of the biosynthetic enzymes likely have broad substrate specificity, and thus, there might be a metabolic grid from a precursor to phomopsin A. The enzyme(s) responsible for the biosynthesis of 3,4-dehydrovaline (dVal) have also not been identified yet. Finally, phomM acts as an S-adenosylmethionine-dependent alpha-N-methyltransferase that catalyzes two successive N-methylation reactions, converting N-desmethyl-phomopsin A to phomopsin A and phomopsin A further to an N,N-dimethylated congener called phomopsin E. The chain is Phomopsin biosynthesis cluster protein D from Diaporthe leptostromiformis (Lupinosis disease fungus).